Reading from the N-terminus, the 213-residue chain is ATP synthase peripheral stalk subunit OSCP, mitochondrial (213 aa).

The N-terminal 23 residues, 1–23 (MAALAVSGLSQQVRCFSTSVVRP), are a transit peptide targeting the mitochondrion. The SIFI-degron signature appears at 5-23 (AVSGLSQQVRCFSTSVVRP). An N6-acetyllysine mark is found at Lys-54, Lys-60, Lys-70, and Lys-73. Lys-90 carries the N6-succinyllysine modification. N6-acetyllysine; alternate occurs at positions 100, 158, and 162. Residues Lys-100, Lys-158, and Lys-162 each carry the N6-succinyllysine; alternate modification. Residues Lys-172, Lys-176, and Lys-192 each carry the N6-acetyllysine modification. Lys-199 carries the N6-succinyllysine modification.

This sequence belongs to the ATPase delta chain family. In terms of assembly, component of the ATP synthase complex composed at least of ATP5F1A/subunit alpha, ATP5F1B/subunit beta, ATP5MC1/subunit c (homooctomer), MT-ATP6/subunit a, MT-ATP8/subunit 8, ATP5ME/subunit e, ATP5MF/subunit f, ATP5MG/subunit g, ATP5MK/subunit k, ATP5MJ/subunit j, ATP5F1C/subunit gamma, ATP5F1D/subunit delta, ATP5F1E/subunit epsilon, ATP5PF/subunit F6, ATP5PB/subunit b, ATP5PD/subunit d, ATP5PO/subunit OSCP. ATP synthase complex consists of a soluble F(1) head domain (subunits alpha(3) and beta(3)) - the catalytic core - and a membrane F(0) domain - the membrane proton channel (subunits c, a, 8, e, f, g, k and j). These two domains are linked by a central stalk (subunits gamma, delta, and epsilon) rotating inside the F1 region and a stationary peripheral stalk (subunits F6, b, d, and OSCP). Post-translationally, acetylation at Lys-162 decreases ATP production. Deacetylated by SIRT3. In response to mitochondrial stress, the precursor protein is ubiquitinated by the SIFI complex in the cytoplasm before mitochondrial import, leading to its degradation. Within the SIFI complex, UBR4 initiates ubiquitin chain that are further elongated or branched by KCMF1.

It localises to the mitochondrion. Its subcellular location is the mitochondrion inner membrane. Subunit OSCP, of the mitochondrial membrane ATP synthase complex (F(1)F(0) ATP synthase or Complex V) that produces ATP from ADP in the presence of a proton gradient across the membrane which is generated by electron transport complexes of the respiratory chain. ATP synthase complex consist of a soluble F(1) head domain - the catalytic core - and a membrane F(1) domain - the membrane proton channel. These two domains are linked by a central stalk rotating inside the F(1) region and a stationary peripheral stalk. During catalysis, ATP synthesis in the catalytic domain of F(1) is coupled via a rotary mechanism of the central stalk subunits to proton translocation. In vivo, can only synthesize ATP although its ATP hydrolase activity can be activated artificially in vitro. Part of the complex F(0) domain. Part of the complex F(0) domain and the peripheric stalk, which acts as a stator to hold the catalytic alpha(3)beta(3) subcomplex and subunit a/ATP6 static relative to the rotary elements. In Bos taurus (Bovine), this protein is ATP synthase peripheral stalk subunit OSCP, mitochondrial.